The following is a 94-amino-acid chain: uncharacterized protein (94 aa).

Over residues 33 to 42 (INSLPTFTKP) the composition is skewed to polar residues. Residues 33-57 (INSLPTFTKPNDSNNNVNKSSNDGV) are disordered. The segment covering 43 to 57 (NDSNNNVNKSSNDGV) has biased composition (low complexity).

This is an uncharacterized protein from Dictyostelium discoideum (Social amoeba).